A 1108-amino-acid chain; its full sequence is Topless-related protein 3 (1108 aa).

Residues 4 to 36 (LSRELVFLILQFLEEEKFKESVHRLEKESGFFF) enclose the LisH domain. In terms of domain architecture, CTLH spans 34 to 92 (FFFNTKYFDEKVLAGEWDDVETYLSGFTKVDDNRYSMKIFFEIRKQKYLEALDRQEKAK). A Phosphoserine modification is found at Ser-214. WD repeat units lie at residues 343-383 (HQGS…RLVS), 405-444 (ETPISVTRVAWSPDGNFIGVAFTKHLIQLYAFSGPNDLRQ), 450-491 (AHVG…HFTF), 493-534 (GHDA…SRVD), 583-623 (EFQK…VLTS), and 628-667 (GGLPALPHLRFNKDGNLLAVTTADNGFKILANPAGFRSLR). Residues 706–725 (HSQMLNGVDPSKSRIDDSTD) are disordered. The span at 716 to 725 (SKSRIDDSTD) shows a compositional bias: basic and acidic residues. WD repeat units follow at residues 751 to 790 (GSSTKVVQLLYTNSGAGILALGSNGIQRLWKWVPNEQNPS), 818 to 856 (NLENAAPCIALSKNDSYVMSAAGGKVSLFNMMTFKVMTT), 859 to 899 (PPPP…VKSK), 902 to 941 (GHQKRITGLAFSTALNILVSSGADAQICFWSIDTWEKRKS), and 994 to 1033 (SLSAPISSAVYACNSQLIYTTFRDGNIGVFDADSLRLRCR). The interval 1084 to 1108 (GMIPPSEAINSPSTTSNQTPEQLQR) is disordered. Over residues 1091–1108 (AINSPSTTSNQTPEQLQR) the composition is skewed to polar residues.

As to quaternary structure, tetramer. Interacts with NINJA/AFPH2. Interacts with SMXL6. Interacts with SPL (via EAR motif). Interacts with SPEAR3/TIE1.

The protein localises to the nucleus. In terms of biological role, transcriptional corepressor. Negative regulator of jasmonate responses. The sequence is that of Topless-related protein 3 (TPR3) from Arabidopsis thaliana (Mouse-ear cress).